A 687-amino-acid polypeptide reads, in one-letter code: Chloride channel protein ClC-Ka (687 aa).

Transmembrane regions (helical) follow at residues 52 to 72, 161 to 181, 202 to 222, and 236 to 256; these read FLMT…FAIG, LFLG…AYLG, VAAA…GVLF, and YWRG…LAVF. Glu259, Glu261, Asp278, and Glu281 together coordinate Ca(2+). Transmembrane regions (helical) follow at residues 282-302, 329-349, 396-416, 417-437, 452-472, and 486-506; these read IFFF…YLFC, ALAT…HFLA, FTIF…LILA, TTIP…AAIG, IVTG…AGAA, and LLAF…MAVL. The Cytoplasmic portion of the chain corresponds to 507–687; that stretch reads AANAIAQSCQ…SNLTNPPAPK (181 aa). 2 consecutive CBS domains span residues 551 to 609 and 626 to 684; these read MNHS…EPPS and CPTE…TNPP.

It belongs to the chloride channel (TC 2.A.49) family. CLCNKA subfamily. Homodimer. Interacts with BSND.

It is found in the basolateral cell membrane. It catalyses the reaction chloride(in) = chloride(out). It carries out the reaction bromide(in) = bromide(out). The catalysed reaction is nitrate(in) = nitrate(out). The enzyme catalyses iodide(out) = iodide(in). Its activity is regulated as follows. Activated by extracellular Ca(2+) and inhibited by extracellular acidic pH. Functionally, anion-selective channel permeable to small monovalent anions with ion selectivity for chloride &gt; bromide &gt; nitrate &gt; iodide. Forms a homodimeric channel where each subunit has its own ion conduction pathway. May conduct double-barreled currents controlled by two types of gates, two fast gates that control each subunit independently and a slow common gate that opens and shuts off both subunits simultaneously. Assembles with the regulatory subunit BSND/Barttin for sorting at the basolateral plasma membrane domain and functional switch to the ion conducting state. CLCNKA:BSND channels display mostly a linear current-voltage relationship with fast gating at negative potentials. Mediates transepithelial chloride transport from the lumen to interstitial compartment along the thin ascending limb of Henle's loop, contributing to generation of hypertonic medullary interstitium as a countercurrent system to achieve urine concentration. Conducts chloride currents in the stria vascularis of the inner ear to establish the endocochlear potential necessary for normal hearing. The polypeptide is Chloride channel protein ClC-Ka (Homo sapiens (Human)).